Here is a 459-residue protein sequence, read N- to C-terminus: Phosphoglucosamine mutase (459 aa).

Residue Ser105 is the Phosphoserine intermediate of the active site. Residues Ser105, Asp252, Asp254, and Asp256 each coordinate Mg(2+). Position 105 is a phosphoserine (Ser105).

The protein belongs to the phosphohexose mutase family. It depends on Mg(2+) as a cofactor. Activated by phosphorylation.

The catalysed reaction is alpha-D-glucosamine 1-phosphate = D-glucosamine 6-phosphate. Its function is as follows. Catalyzes the conversion of glucosamine-6-phosphate to glucosamine-1-phosphate. The protein is Phosphoglucosamine mutase of Bifidobacterium adolescentis (strain ATCC 15703 / DSM 20083 / NCTC 11814 / E194a).